The chain runs to 89 residues: Large ribosomal subunit protein bL27 (89 aa).

The interval 1 to 24 is disordered; that stretch reads MAHKKAGGSSRNGRDSDGRRLGVK.

It belongs to the bacterial ribosomal protein bL27 family.

This chain is Large ribosomal subunit protein bL27, found in Azorhizobium caulinodans (strain ATCC 43989 / DSM 5975 / JCM 20966 / LMG 6465 / NBRC 14845 / NCIMB 13405 / ORS 571).